Consider the following 74-residue polypeptide: Translational regulator CsrA (74 aa).

Belongs to the CsrA/RsmA family. In terms of assembly, homodimer; the beta-strands of each monomer intercalate to form a hydrophobic core, while the alpha-helices form wings that extend away from the core.

It localises to the cytoplasm. Functionally, a translational regulator that binds mRNA to regulate translation initiation and/or mRNA stability. Usually binds in the 5'-UTR at or near the Shine-Dalgarno sequence preventing ribosome-binding, thus repressing translation. Its main target seems to be the major flagellin gene, while its function is anatagonized by FliW. The chain is Translational regulator CsrA from Bacillus velezensis (strain DSM 23117 / BGSC 10A6 / LMG 26770 / FZB42) (Bacillus amyloliquefaciens subsp. plantarum).